We begin with the raw amino-acid sequence, 448 residues long: Phosphoglucosamine mutase (448 aa).

The Phosphoserine intermediate role is filled by Ser100. The Mg(2+) site is built by Ser100, Asp240, Asp242, and Asp244. Ser100 is modified (phosphoserine).

The protein belongs to the phosphohexose mutase family. It depends on Mg(2+) as a cofactor. In terms of processing, activated by phosphorylation.

It catalyses the reaction alpha-D-glucosamine 1-phosphate = D-glucosamine 6-phosphate. Its function is as follows. Catalyzes the conversion of glucosamine-6-phosphate to glucosamine-1-phosphate. In Bacillus velezensis (strain DSM 23117 / BGSC 10A6 / LMG 26770 / FZB42) (Bacillus amyloliquefaciens subsp. plantarum), this protein is Phosphoglucosamine mutase.